Here is a 271-residue protein sequence, read N- to C-terminus: Sedoheptulose 1,7-bisphosphatase (271 aa).

Position 12 (arginine 12) interacts with substrate. The active-site Tele-phosphohistidine intermediate is the histidine 13. Substrate contacts are provided by residues 24 to 25 (YT), arginine 69, 99 to 102 (EWEY), arginine 181, and histidine 244. Catalysis depends on glutamate 99, which acts as the Proton donor/acceptor.

Belongs to the phosphoglycerate mutase family. SHB17 subfamily. As to quaternary structure, homodimer.

Its subcellular location is the cytoplasm. The protein localises to the nucleus. The catalysed reaction is D-sedoheptulose 1,7-bisphosphate + H2O = D-sedoheptulose 7-phosphate + phosphate. Its function is as follows. Sedoheptulose 1,7-bisphosphatase involved in riboneogenesis. Dephosphorylates sedoheptulose 1,7-bisphosphate (SBP), which is converted via the non-oxidative pentose phosphate pathway to ribose-5-phosphate. Has a fructose 1,6-bisphosphatase activity in vitro, but this is probably not biologically relevant, since deletion does not affect fructose 1,6-biphosphate (FBP) levels. In Saccharomyces cerevisiae (strain ATCC 204508 / S288c) (Baker's yeast), this protein is Sedoheptulose 1,7-bisphosphatase (SHB17).